The following is a 293-amino-acid chain: Cep170-like protein (293 aa).

2 disordered regions span residues 78 to 110 (PPLV…LTIT) and 217 to 270 (FPSA…AESE). The segment covering 227–245 (KQKSSPVNNHHSPGQTPTL) has biased composition (polar residues).

Belongs to the CEP170 family.

The chain is Cep170-like protein (CEP170P1) from Homo sapiens (Human).